A 221-amino-acid polypeptide reads, in one-letter code: Large ribosomal subunit protein uL16x (221 aa).

This sequence belongs to the universal ribosomal protein uL16 family. Component of the small ribosomal subunit. Mature ribosomes consist of a small (40S) and a large (60S) subunit. The 40S subunit contains about 33 different proteins and 1 molecule of RNA (18S). The 60S subunit contains about 49 different proteins and 3 molecules of RNA (25S, 5.8S and 5S).

This chain is Large ribosomal subunit protein uL16x (RPL10C), found in Arabidopsis thaliana (Mouse-ear cress).